The sequence spans 58 residues: Large ribosomal subunit protein uL30 (58 aa).

This sequence belongs to the universal ribosomal protein uL30 family. In terms of assembly, part of the 50S ribosomal subunit.

This is Large ribosomal subunit protein uL30 from Pseudomonas savastanoi pv. phaseolicola (strain 1448A / Race 6) (Pseudomonas syringae pv. phaseolicola (strain 1448A / Race 6)).